A 347-amino-acid polypeptide reads, in one-letter code: Probable replication factor C subunit 5 (347 aa).

64 to 71 (GPPGTGKT) is a binding site for ATP.

The protein belongs to the activator 1 small subunits family. Heteropentamer of various rfc subunits that forms a complex (RFC) with PCNA in the presence of ATP.

The protein localises to the nucleus. Functionally, the elongation of primed DNA templates by DNA polymerase delta and epsilon requires the action of the accessory proteins PCNA and activator 1. The chain is Probable replication factor C subunit 5 (rfc5) from Dictyostelium discoideum (Social amoeba).